Here is a 94-residue protein sequence, read N- to C-terminus: Protein P19 (94 aa).

Its function is as follows. Binds to single-stranded DNA (ssDNA). The polypeptide is Protein P19 (XIX) (Acinetobacter calcoaceticus (Arthrobacter siderocapsulatus)).